The following is a 418-amino-acid chain: Gamma-glutamyl phosphate reductase (418 aa).

It belongs to the gamma-glutamyl phosphate reductase family.

The protein localises to the cytoplasm. It carries out the reaction L-glutamate 5-semialdehyde + phosphate + NADP(+) = L-glutamyl 5-phosphate + NADPH + H(+). It participates in amino-acid biosynthesis; L-proline biosynthesis; L-glutamate 5-semialdehyde from L-glutamate: step 2/2. Its function is as follows. Catalyzes the NADPH-dependent reduction of L-glutamate 5-phosphate into L-glutamate 5-semialdehyde and phosphate. The product spontaneously undergoes cyclization to form 1-pyrroline-5-carboxylate. This chain is Gamma-glutamyl phosphate reductase, found in Lacticaseibacillus casei (strain BL23) (Lactobacillus casei).